Reading from the N-terminus, the 275-residue chain is Membrane protein insertase YidC 1 (275 aa).

The first 25 residues, 1-25 (MRKVLRVKKNIKIARIVPLVLLLVA), serve as a signal peptide directing secretion. The N-palmitoyl cysteine moiety is linked to residue Cys-26. Cys-26 carries the S-diacylglycerol cysteine lipid modification. 5 helical membrane passes run 58-78 (SIGV…MPLF), 129-149 (YASL…FQAL), 171-191 (LYLL…LTNL), 198-216 (VMMT…FMGF), and 222-240 (VVLY…LLLL).

Belongs to the OXA1/ALB3/YidC family. Type 2 subfamily.

Its subcellular location is the cell membrane. Its function is as follows. Required for the insertion and/or proper folding and/or complex formation of integral membrane proteins into the membrane. Involved in integration of membrane proteins that insert both dependently and independently of the Sec translocase complex, as well as at least some lipoproteins. This Streptococcus pyogenes serotype M1 protein is Membrane protein insertase YidC 1.